The sequence spans 247 residues: Tyrosine recombinase XerD-like (247 aa).

One can recognise a Core-binding (CB) domain in the interval 1 to 72; it reads MIKHIEAFLA…TVNQFLHYLY (72 aa). One can recognise a Tyr recombinase domain in the interval 91–247; the sequence is STKVPFTYQL…PITLEKYYRL (157 aa). Arg212 is an active-site residue. The active-site O-(3'-phospho-DNA)-tyrosine intermediate is the Tyr244.

This sequence belongs to the 'phage' integrase family. XerD-like subfamily.

Its subcellular location is the cytoplasm. Putative tyrosine recombinase. Not involved in the cutting and rejoining of the recombining DNA molecules on dif(SL) site. In Streptococcus uberis (strain ATCC BAA-854 / 0140J), this protein is Tyrosine recombinase XerD-like.